A 204-amino-acid polypeptide reads, in one-letter code: Methylthioribulose-1-phosphate dehydratase (204 aa).

Residues H95 and H97 each contribute to the Zn(2+) site.

The protein belongs to the aldolase class II family. MtnB subfamily. It depends on Zn(2+) as a cofactor.

It catalyses the reaction 5-(methylsulfanyl)-D-ribulose 1-phosphate = 5-methylsulfanyl-2,3-dioxopentyl phosphate + H2O. Its pathway is amino-acid biosynthesis; L-methionine biosynthesis via salvage pathway; L-methionine from S-methyl-5-thio-alpha-D-ribose 1-phosphate: step 2/6. Functionally, catalyzes the dehydration of methylthioribulose-1-phosphate (MTRu-1-P) into 2,3-diketo-5-methylthiopentyl-1-phosphate (DK-MTP-1-P). The sequence is that of Methylthioribulose-1-phosphate dehydratase from Parvibaculum lavamentivorans (strain DS-1 / DSM 13023 / NCIMB 13966).